We begin with the raw amino-acid sequence, 927 residues long: LPS-assembly protein LptD (927 aa).

Positions 1-22 (MALKSPAFRKKFPLLVTGSLLA) are cleaved as a signal peptide. A disordered region spans residues 60 to 100 (LPPRPVHSTASVSSNGTVTSESSSSGEQVAGPQLVTEAKGK). Over residues 70–86 (SVSSNGTVTSESSSSGE) the composition is skewed to low complexity.

Belongs to the LptD family. Component of the lipopolysaccharide transport and assembly complex. Interacts with LptE and LptA.

The protein localises to the cell outer membrane. In terms of biological role, together with LptE, is involved in the assembly of lipopolysaccharide (LPS) at the surface of the outer membrane. The protein is LPS-assembly protein LptD of Pseudomonas syringae pv. tomato (strain ATCC BAA-871 / DC3000).